The following is a 251-amino-acid chain: 3-deoxy-manno-octulosonate cytidylyltransferase (251 aa).

Belongs to the KdsB family.

The protein resides in the cytoplasm. It carries out the reaction 3-deoxy-alpha-D-manno-oct-2-ulosonate + CTP = CMP-3-deoxy-beta-D-manno-octulosonate + diphosphate. It participates in nucleotide-sugar biosynthesis; CMP-3-deoxy-D-manno-octulosonate biosynthesis; CMP-3-deoxy-D-manno-octulosonate from 3-deoxy-D-manno-octulosonate and CTP: step 1/1. It functions in the pathway bacterial outer membrane biogenesis; lipopolysaccharide biosynthesis. Its function is as follows. Activates KDO (a required 8-carbon sugar) for incorporation into bacterial lipopolysaccharide in Gram-negative bacteria. This Chlorobium luteolum (strain DSM 273 / BCRC 81028 / 2530) (Pelodictyon luteolum) protein is 3-deoxy-manno-octulosonate cytidylyltransferase.